Here is a 254-residue protein sequence, read N- to C-terminus: 5'-nucleotidase SurE (254 aa).

A divalent metal cation is bound by residues D8, D9, S38, and N91.

Belongs to the SurE nucleotidase family. The cofactor is a divalent metal cation.

The protein resides in the cytoplasm. The catalysed reaction is a ribonucleoside 5'-phosphate + H2O = a ribonucleoside + phosphate. Functionally, nucleotidase that shows phosphatase activity on nucleoside 5'-monophosphates. The chain is 5'-nucleotidase SurE from Anaeromyxobacter sp. (strain K).